The sequence spans 367 residues: Anhydro-N-acetylmuramic acid kinase (367 aa).

An ATP-binding site is contributed by 13-20; sequence GTSMDGAD.

Belongs to the anhydro-N-acetylmuramic acid kinase family.

It catalyses the reaction 1,6-anhydro-N-acetyl-beta-muramate + ATP + H2O = N-acetyl-D-muramate 6-phosphate + ADP + H(+). It functions in the pathway amino-sugar metabolism; 1,6-anhydro-N-acetylmuramate degradation. Its pathway is cell wall biogenesis; peptidoglycan recycling. Its function is as follows. Catalyzes the specific phosphorylation of 1,6-anhydro-N-acetylmuramic acid (anhMurNAc) with the simultaneous cleavage of the 1,6-anhydro ring, generating MurNAc-6-P. Is required for the utilization of anhMurNAc either imported from the medium or derived from its own cell wall murein, and thus plays a role in cell wall recycling. The sequence is that of Anhydro-N-acetylmuramic acid kinase from Neisseria meningitidis serogroup A / serotype 4A (strain DSM 15465 / Z2491).